The following is a 204-amino-acid chain: MTSQPLRVGIGGPVGSGKTALTLALCRELRERYNLAVVTNDIYTQEDAEFLVRNEALAPERIIGVETGGCPHTAIREDASINLEAVDQLNRRFPGLELILVESGGDNLSATFSPELSDLTLYVIDVSAGDKIPRKGGPGICKSDLLVINKIDLAPLVGASLDVMDRDARRMRGDKPFVFSNQKTGQGLDEIIAFIERQGLLTAA.

GTP is bound at residue 12–19; it reads GPVGSGKT.

This sequence belongs to the SIMIBI class G3E GTPase family. UreG subfamily. In terms of assembly, homodimer. UreD, UreF and UreG form a complex that acts as a GTP-hydrolysis-dependent molecular chaperone, activating the urease apoprotein by helping to assemble the nickel containing metallocenter of UreC. The UreE protein probably delivers the nickel.

Its subcellular location is the cytoplasm. In terms of biological role, facilitates the functional incorporation of the urease nickel metallocenter. This process requires GTP hydrolysis, probably effectuated by UreG. The sequence is that of Urease accessory protein UreG from Pseudomonas aeruginosa (strain LESB58).